The following is a 427-amino-acid chain: tRNA(Ile)-lysidine synthase (427 aa).

27 to 32 is a binding site for ATP; sequence SGGVDS.

It belongs to the tRNA(Ile)-lysidine synthase family.

The protein resides in the cytoplasm. The catalysed reaction is cytidine(34) in tRNA(Ile2) + L-lysine + ATP = lysidine(34) in tRNA(Ile2) + AMP + diphosphate + H(+). Its function is as follows. Ligates lysine onto the cytidine present at position 34 of the AUA codon-specific tRNA(Ile) that contains the anticodon CAU, in an ATP-dependent manner. Cytidine is converted to lysidine, thus changing the amino acid specificity of the tRNA from methionine to isoleucine. The chain is tRNA(Ile)-lysidine synthase from Streptococcus equi subsp. equi (strain 4047).